We begin with the raw amino-acid sequence, 765 residues long: Endothelin-converting enzyme 2 (765 aa).

The Cytoplasmic portion of the chain corresponds to 1 to 60; sequence MSVALQELGGGGNMVEYKRATLRDEDAPETPVEGGASPDAVEAGFRKRTSRLLGLHTQLE. A helical; Signal-anchor for type II membrane protein transmembrane segment spans residues 61 to 81; it reads LVLAGVSLLLAALLLGCLVAL. The Lumenal segment spans residues 82 to 765; that stretch reads GVQYHRDPSH…MNSGQLCEVW (684 aa). Residues 93-765 form the Peptidase M13 domain; that stretch reads TCLTEACIRV…MNSGQLCEVW (673 aa). Cystine bridges form between Cys-94/Cys-99, Cys-117/Cys-750, Cys-125/Cys-710, Cys-181/Cys-430, and Cys-639/Cys-762. Residues Asn-161, Asn-165, Asn-206, Asn-266, Asn-311, Asn-378, and Asn-534 are each glycosylated (N-linked (GlcNAc...) asparagine). His-602 lines the Zn(2+) pocket. The active site involves Glu-603. His-606 contacts Zn(2+). 2 N-linked (GlcNAc...) asparagine glycosylation sites follow: Asn-627 and Asn-635. Glu-662 serves as a coordination point for Zn(2+). Catalysis depends on Asp-666, which acts as the Proton donor.

The protein belongs to the peptidase M13 family. Zn(2+) is required as a cofactor. Isoform ECE2-1 and isoform ECE2-2 are expressed in brain and adrenal gland.

It is found in the golgi apparatus membrane. Its subcellular location is the cytoplasmic vesicle. The protein localises to the secretory vesicle membrane. It catalyses the reaction Hydrolysis of the 21-Trp-|-Val-22 bond in big endothelin to form endothelin 1.. Functionally, converts big endothelin-1 to endothelin-1. Also involved in the processing of various neuroendocrine peptides, including neurotensin, angiotensin I, substance P, proenkephalin-derived peptides, and prodynorphin-derived peptides. May play a role in amyloid-beta processing. The protein is Endothelin-converting enzyme 2 of Bos taurus (Bovine).